The sequence spans 279 residues: MRNKAVLDLHLVSDSTCETVIAVARSAVEHFKSLEVNEFVWSLVGSKRQVDKVMLNINPERHNLIMYTVVDDDLRKYLKEKATAQSVRCIPVLAHVIREISCYLQVTKDPNAHPHKLGDEYFNRIDAINYTISHDDGQNLWDIDQADIIIVGVSRTSKSPTSIYLAYRGYRVVNIPLVCSVQLPVDPATIADKLVVGLTIDADRLIQIRRNRLISMKHQENCNYVSYEQVVEEISEMKKICAKNRWPTIDVTQKSVEEIAATIIQFFNRKNNRTGDALY.

152-159 is an ADP binding site; that stretch reads GVSRTSKS.

Belongs to the pyruvate, phosphate/water dikinase regulatory protein family. PDRP subfamily.

It carries out the reaction N(tele)-phospho-L-histidyl/L-threonyl-[pyruvate, phosphate dikinase] + ADP = N(tele)-phospho-L-histidyl/O-phospho-L-threonyl-[pyruvate, phosphate dikinase] + AMP + H(+). The enzyme catalyses N(tele)-phospho-L-histidyl/O-phospho-L-threonyl-[pyruvate, phosphate dikinase] + phosphate + H(+) = N(tele)-phospho-L-histidyl/L-threonyl-[pyruvate, phosphate dikinase] + diphosphate. Bifunctional serine/threonine kinase and phosphorylase involved in the regulation of the pyruvate, phosphate dikinase (PPDK) by catalyzing its phosphorylation/dephosphorylation. This Anaplasma marginale (strain St. Maries) protein is Putative pyruvate, phosphate dikinase regulatory protein.